Here is a 688-residue protein sequence, read N- to C-terminus: Alpha-1,4-glucan:maltose-1-phosphate maltosyltransferase (688 aa).

Alpha-maltose 1-phosphate is bound by residues lysine 289, glutamine 349, and aspartate 384. Residue aspartate 420 is the Nucleophile of the active site. Position 421 (asparagine 421) interacts with alpha-maltose 1-phosphate. The active-site Proton donor is glutamate 449. Residue 560–561 coordinates alpha-maltose 1-phosphate; that stretch reads KY.

This sequence belongs to the glycosyl hydrolase 13 family. GlgE subfamily. Homodimer.

It carries out the reaction alpha-maltose 1-phosphate + [(1-&gt;4)-alpha-D-glucosyl](n) = [(1-&gt;4)-alpha-D-glucosyl](n+2) + phosphate. Functionally, maltosyltransferase that uses maltose 1-phosphate (M1P) as the sugar donor to elongate linear or branched alpha-(1-&gt;4)-glucans. Is involved in a branched alpha-glucan biosynthetic pathway from trehalose, together with TreS, Mak and GlgB. The polypeptide is Alpha-1,4-glucan:maltose-1-phosphate maltosyltransferase (Rhodospirillum rubrum (strain ATCC 11170 / ATH 1.1.1 / DSM 467 / LMG 4362 / NCIMB 8255 / S1)).